The sequence spans 128 residues: Large ribosomal subunit protein eL8 (128 aa).

Belongs to the eukaryotic ribosomal protein eL8 family. In terms of assembly, part of the 50S ribosomal subunit. Probably part of the RNase P complex.

It is found in the cytoplasm. In terms of biological role, multifunctional RNA-binding protein that recognizes the K-turn motif in ribosomal RNA, the RNA component of RNase P, box H/ACA, box C/D and box C'/D' sRNAs. The chain is Large ribosomal subunit protein eL8 from Nitrosopumilus maritimus (strain SCM1).